The chain runs to 301 residues: Protein ARMCX6 (301 aa).

The tract at residues 1–6 (MGRARE) is mitochondrion outer membrane (MOM)-targeting sequence. Over 1-7 (MGRAREM) the chain is Mitochondrial intermembrane. The helical; Signal-anchor transmembrane segment at 8-25 (GWMAAGLMIGAGACYCMY) threads the bilayer. Residues 26 to 36 (KLTMGRDEGNE) form a mitochondrion outer membrane (MOM)-targeting sequence region. Over 26–301 (KLTMGRDEGN…REMLVEAISP (276 aa)) the chain is Cytoplasmic. A disordered region spans residues 70-105 (SEDGEWDEPGAPGGTEDRRSGGGKANRAHPTKQRPF).

The protein belongs to the eutherian X-chromosome-specific Armcx family.

Its subcellular location is the mitochondrion. The protein resides in the mitochondrion outer membrane. Its function is as follows. May regulate the dynamics and distribution of mitochondria in neural cells. The sequence is that of Protein ARMCX6 (Armcx6) from Rattus norvegicus (Rat).